We begin with the raw amino-acid sequence, 174 residues long: Peptide deformylase (174 aa).

The Fe cation site is built by Cys-91 and His-133. Residue Glu-134 is part of the active site. His-137 lines the Fe cation pocket.

It belongs to the polypeptide deformylase family. Requires Fe(2+) as cofactor.

The catalysed reaction is N-terminal N-formyl-L-methionyl-[peptide] + H2O = N-terminal L-methionyl-[peptide] + formate. Its function is as follows. Removes the formyl group from the N-terminal Met of newly synthesized proteins. Requires at least a dipeptide for an efficient rate of reaction. N-terminal L-methionine is a prerequisite for activity but the enzyme has broad specificity at other positions. The protein is Peptide deformylase of Fusobacterium nucleatum subsp. nucleatum (strain ATCC 25586 / DSM 15643 / BCRC 10681 / CIP 101130 / JCM 8532 / KCTC 2640 / LMG 13131 / VPI 4355).